The following is a 55-amino-acid chain: Large ribosomal subunit protein bL33 (55 aa).

This sequence belongs to the bacterial ribosomal protein bL33 family.

The chain is Large ribosomal subunit protein bL33 from Alcanivorax borkumensis (strain ATCC 700651 / DSM 11573 / NCIMB 13689 / SK2).